The sequence spans 113 residues: TYRO protein tyrosine kinase-binding protein (113 aa).

Residues Met-1–Ala-27 form the signal peptide. At Gln-28–Pro-40 the chain is on the extracellular side. Residues Gly-41–Val-61 form a helical membrane-spanning segment. Asp-50 lines the Ca(2+) pocket. Topologically, residues Tyr-62 to Lys-113 are cytoplasmic. The tract at residues Ala-75–Lys-113 is disordered. The ITAM domain occupies Arg-80–Gln-108. Residues Thr-87–Asp-100 show a composition bias toward polar residues. 2 positions are modified to phosphotyrosine: Tyr-91 and Tyr-102.

The protein belongs to the TYROBP family. In terms of assembly, homodimer; disulfide-linked. Homotrimer; disulfide-linked. Homotetramer; disulfide-linked. Homotrimers and homotetramers form when low levels of partner receptors are available and is competitive with assembly with interacting receptors. They may represent alternative oligomerization states or may be intermediates in the receptor assembly process. Binding of a metal cation aids in homooligomerization through coordination of the metal ion by the subunits of the oligomer. Interacts with TREM1. Interacts with TREM2. Interacts with CLECSF5. Interacts with CD300LB and CD300C2. Interacts with CD300E. Interacts (via ITAM domain) with SYK (via SH2 domains); activates SYK mediating neutrophils and macrophages integrin-mediated activation. Interacts with KLRC2. Interacts with CD300H. Interacts with KLRD1. Interacts with SIGLEC1. Following ligand binding by associated receptors, tyrosine phosphorylated in the ITAM domain which leads to activation of additional tyrosine kinases and subsequent cell activation.

It is found in the cell membrane. In terms of biological role, adapter protein which non-covalently associates with activating receptors found on the surface of a variety of immune cells to mediate signaling and cell activation following ligand binding by the receptors. TYROBP is tyrosine-phosphorylated in the ITAM domain following ligand binding by the associated receptors which leads to activation of additional tyrosine kinases and subsequent cell activation. Also has an inhibitory role in some cells. Non-covalently associates with activating receptors of the CD300 family to mediate cell activation. Also mediates cell activation through association with activating receptors of the CD200R family. Required for neutrophil activation mediated by integrin. Required for the activation of myeloid cells mediated by the CLEC5A/MDL1 receptor. Associates with natural killer (NK) cell receptors such as the KLRD1/KLRC2 heterodimer to mediate NK cell activation. Associates with TREM1 to mediate activation of neutrophils and monocytes. Associates with TREM2 on monocyte-derived dendritic cells to mediate up-regulation of chemokine receptor CCR7 and dendritic cell maturation and survival. Association with TREM2 mediates cytokine-induced formation of multinucleated giant cells which are formed by the fusion of macrophages. Stabilizes the TREM2 C-terminal fragment (TREM2-CTF) produced by TREM2 ectodomain shedding which suppresses the release of pro-inflammatory cytokines. In microglia, required with TREM2 for phagocytosis of apoptotic neurons. Required with ITGAM/CD11B in microglia to control production of microglial superoxide ions which promote the neuronal apoptosis that occurs during brain development. Promotes pro-inflammatory responses in microglia following nerve injury which accelerates degeneration of injured neurons. Positively regulates the expression of the IRAK3/IRAK-M kinase and IL10 production by liver dendritic cells and inhibits their T cell allosimulatory ability. Negatively regulates B cell proliferation. Required for CSF1-mediated osteoclast cytoskeletal organization. Positively regulates multinucleation during osteoclast development. The sequence is that of TYRO protein tyrosine kinase-binding protein from Pan troglodytes (Chimpanzee).